The chain runs to 389 residues: Aromatic-amino-acid aminotransferase 2 (389 aa).

Lysine 233 carries the N6-(pyridoxal phosphate)lysine modification.

The protein belongs to the class-I pyridoxal-phosphate-dependent aminotransferase family. As to quaternary structure, homodimer. The cofactor is pyridoxal 5'-phosphate.

The enzyme catalyses an aromatic L-alpha-amino acid + 2-oxoglutarate = an aromatic oxo-acid + L-glutamate. Functionally, catalyzes the transamination of phenylalanine, tyrosine and tryptophan. Shows virtually no activity towards aspartic acid, alanine, valine or isoleucine. This Thermococcus litoralis (strain ATCC 51850 / DSM 5473 / JCM 8560 / NS-C) protein is Aromatic-amino-acid aminotransferase 2.